We begin with the raw amino-acid sequence, 813 residues long: MSRINFKKSSASTTPTSPHCPSPRLISLPRCASSSIDRKDQASPMASPSTPLYPKHSDSLHSLSGHHSAGGAGTSDKEPPKFKYKMIMVHLPFDQHSRVEVRPGETARDAISKLLKKRNITPQLCHVNASSDPKQESIELSLTMEEIASRLPGNELWVHSEYLNTVSSIKHAIVRRTFIPPKSCDVCNNPIWMMGFRCEFCQFKFHQRCSSFAPLYCDLLQSVPKNEDLVKELFGIASQVEGPDRSVAEIVLANLAPTSGQSPAATPDSSHPDLTSIKRTGGVKRHPMAVSPQNETSQLSPSGPYPRDRSSSAPNINAINDEATVQHNQRILDALEAQRLEEESRDKTGSLLSTQARHRPHFQSGHILSGARMNRLHPLVDCTPLGSNSPSSTCSSPPGGLIGQPTLGQSPNVSGSTTSSLVAAHLHTLPLTPPQSAPPQKISPGFFRNRSRSPGERLDAQRPRPPQKPHHEDWEILPNEFIIQYKVGSGSFGTVYRGEFFGTVAIKKLNVVDPTPSQMAAFKNEVAVLKKTRHLNVLLFMGWVREPEIAIITQWCEGSSLYRHIHVQEPRVEFEMGAIIDILKQVSLGMNYLHSKNIIHRDLKTNNIFLMDDMSTVKIGDFGLATVKTKWTVNGGQQQQQPTGSILWMAPEVIRMQDDNPYTPQSDVYSFGICMYEILSSHLPYSNINNRDQILFMVGRGYLRPDRSKIRHDTPKSMLKLYDNCIMFDRNERPVFGEVLERLRDIILPKLTRSQSAPNVLHLDSQYSVMDAVMRSQMLSWSYIPPATAKTPQSAAAAAAANKKAYYNVYGLI.

The tract at residues 1–79 (MSRINFKKSS…GGAGTSDKEP (79 aa)) is disordered. Residues 9–23 (SSASTTPTSPHCPSP) show a composition bias toward low complexity. The 77-residue stretch at 85-161 (KMIMVHLPFD…PGNELWVHSE (77 aa)) folds into the RBD domain. The Phorbol-ester/DAG-type zinc-finger motif lies at 170-217 (KHAIVRRTFIPPKSCDVCNNPIWMMGFRCEFCQFKFHQRCSSFAPLYC). Cys184, Cys187, Cys198, Cys201, His206, Cys209, and Cys217 together coordinate Zn(2+). Composition is skewed to polar residues over residues 258-273 (TSGQSPAATPDSSHPD) and 291-301 (SPQNETSQLSP). Disordered stretches follow at residues 258-315 (TSGQ…SAPN), 338-358 (QRLEEESRDKTGSLLSTQARH), and 383-472 (TPLG…PHHE). Residues 338–348 (QRLEEESRDKT) show a composition bias toward basic and acidic residues. Over residues 386–399 (GSNSPSSTCSSPPG) the composition is skewed to low complexity. Polar residues predominate over residues 406–421 (TLGQSPNVSGSTTSSL). Residues 453 to 462 (SPGERLDAQR) are compositionally biased toward basic and acidic residues. Positions 481–748 (FIIQYKVGSG…VLERLRDIIL (268 aa)) constitute a Protein kinase domain. ATP contacts are provided by residues 487 to 495 (VGSGSFGTV) and Lys507. The active-site Proton acceptor is the Asp602.

The protein belongs to the protein kinase superfamily. TKL Ser/Thr protein kinase family. RAF subfamily. As to quaternary structure, interacts with cdf-1 in a zinc-dependent manner which promotes its activity. Zn(2+) is required as a cofactor.

It carries out the reaction L-seryl-[protein] + ATP = O-phospho-L-seryl-[protein] + ADP + H(+). The catalysed reaction is L-threonyl-[protein] + ATP = O-phospho-L-threonyl-[protein] + ADP + H(+). Protein kinase that participates in the induction of vulva and has roles in fertility and viability. Acts downstream of the Ras protein let-60. Required for progression of developing oocytes through the pachytene stage. Plays a role in responses to M.nematophilum-mediated bacterial infection by promoting tail swelling and preventing constipation. Positively regulates lifespan upstream of mek-2 and mpk-1. This Caenorhabditis elegans protein is Raf homolog serine/threonine-protein kinase (lin-45).